A 563-amino-acid polypeptide reads, in one-letter code: Arginine--tRNA ligase (563 aa).

The 'HIGH' region signature appears at 123–133; that stretch reads PNIAKDMHVGH.

The protein belongs to the class-I aminoacyl-tRNA synthetase family. As to quaternary structure, monomer.

The protein localises to the cytoplasm. The catalysed reaction is tRNA(Arg) + L-arginine + ATP = L-arginyl-tRNA(Arg) + AMP + diphosphate. In Chlamydia trachomatis serovar D (strain ATCC VR-885 / DSM 19411 / UW-3/Cx), this protein is Arginine--tRNA ligase (argS).